The sequence spans 214 residues: Pyridoxine/pyridoxamine 5'-phosphate oxidase (214 aa).

Residues 10–13 (RLNY) and K68 contribute to the substrate site. FMN is bound by residues 63 to 68 (RMVLLK), 78 to 79 (YT), K85, and Q107. Substrate is bound by residues Y125, R129, and S133. Residues 142-143 (QS) and W187 contribute to the FMN site. Residue 193 to 195 (RLH) participates in substrate binding. R197 provides a ligand contact to FMN.

Belongs to the pyridoxamine 5'-phosphate oxidase family. Homodimer. Requires FMN as cofactor.

The catalysed reaction is pyridoxamine 5'-phosphate + O2 + H2O = pyridoxal 5'-phosphate + H2O2 + NH4(+). The enzyme catalyses pyridoxine 5'-phosphate + O2 = pyridoxal 5'-phosphate + H2O2. Its pathway is cofactor metabolism; pyridoxal 5'-phosphate salvage; pyridoxal 5'-phosphate from pyridoxamine 5'-phosphate: step 1/1. It functions in the pathway cofactor metabolism; pyridoxal 5'-phosphate salvage; pyridoxal 5'-phosphate from pyridoxine 5'-phosphate: step 1/1. In terms of biological role, catalyzes the oxidation of either pyridoxine 5'-phosphate (PNP) or pyridoxamine 5'-phosphate (PMP) into pyridoxal 5'-phosphate (PLP). The chain is Pyridoxine/pyridoxamine 5'-phosphate oxidase from Synechocystis sp. (strain ATCC 27184 / PCC 6803 / Kazusa).